A 137-amino-acid chain; its full sequence is Endoribonuclease YbeY (137 aa).

Positions 105, 109, and 115 each coordinate Zn(2+).

The protein belongs to the endoribonuclease YbeY family. Zn(2+) is required as a cofactor.

Its subcellular location is the cytoplasm. Functionally, single strand-specific metallo-endoribonuclease involved in late-stage 70S ribosome quality control and in maturation of the 3' terminus of the 16S rRNA. This Chlorobium luteolum (strain DSM 273 / BCRC 81028 / 2530) (Pelodictyon luteolum) protein is Endoribonuclease YbeY.